The sequence spans 101 residues: Small ribosomal subunit protein uS10 (101 aa).

This sequence belongs to the universal ribosomal protein uS10 family. Part of the 30S ribosomal subunit.

Functionally, involved in the binding of tRNA to the ribosomes. This chain is Small ribosomal subunit protein uS10, found in Anaeromyxobacter dehalogenans (strain 2CP-C).